A 351-amino-acid chain; its full sequence is Histidine protein kinase SaeS (351 aa).

The next 2 membrane-spanning stretches (helical) occupy residues 9–29 (IIIG…IAYI) and 40–60 (TLTL…SIFI). The 54-residue stretch at 61–114 (NPLIQKIKQFNIKTKQFANGNYASNDKTFNSPKEIYELNQSFNKMASEITQQMN) folds into the HAMP domain. The 220-residue stretch at 129 to 348 (NLAHDLKTPL…TMTVTLHKLD (220 aa)) folds into the Histidine kinase domain. H132 is subject to Phosphohistidine; by autocatalysis.

In terms of processing, autophosphorylated.

It is found in the cell membrane. The enzyme catalyses ATP + protein L-histidine = ADP + protein N-phospho-L-histidine.. Member of the two-component regulatory system SaeR/SaeS involved in the regulation of staphylococcal virulence factors in a strain-dependent fashion. Probably functions as a membrane-associated protein kinase that upon sensing the appropriate signal, autophosphorylates and in turn activates the cytosolic response regulator SaeR. This chain is Histidine protein kinase SaeS (saeS), found in Staphylococcus aureus (strain USA300).